The sequence spans 68 residues: UPF0253 protein ASA_2184 (68 aa).

The protein belongs to the UPF0253 family.

This chain is UPF0253 protein ASA_2184, found in Aeromonas salmonicida (strain A449).